Reading from the N-terminus, the 213-residue chain is MKVLITGFDPFGGESINPALEAVKMIPENIEGAQVIKLEIPTVFRKSLEKIEEKIEEINPDVVISIGQAGGRFGVTPERVAINMDDARIEDNEGNQPIDISIYEDGESAYFSNLPIKAMVKEMVDNGIPASVSNTAGTFVCNHVMYGVLYLVNKKYKNIRAGFIHVPYIPTQVVNKPNTPSMSINDIAKGLELSIKAIVLNDNDIKTVGGAVC.

Active-site residues include E78, C141, and H165.

Belongs to the peptidase C15 family. As to quaternary structure, homotetramer.

It localises to the cytoplasm. It carries out the reaction Release of an N-terminal pyroglutamyl group from a polypeptide, the second amino acid generally not being Pro.. Its function is as follows. Removes 5-oxoproline from various penultimate amino acid residues except L-proline. This chain is Pyrrolidone-carboxylate peptidase, found in Clostridium perfringens (strain ATCC 13124 / DSM 756 / JCM 1290 / NCIMB 6125 / NCTC 8237 / Type A).